We begin with the raw amino-acid sequence, 106 residues long: Large ribosomal subunit protein uL24 (106 aa).

The protein belongs to the universal ribosomal protein uL24 family. Part of the 50S ribosomal subunit.

One of two assembly initiator proteins, it binds directly to the 5'-end of the 23S rRNA, where it nucleates assembly of the 50S subunit. In terms of biological role, one of the proteins that surrounds the polypeptide exit tunnel on the outside of the subunit. In Marinobacter nauticus (strain ATCC 700491 / DSM 11845 / VT8) (Marinobacter aquaeolei), this protein is Large ribosomal subunit protein uL24.